Reading from the N-terminus, the 151-residue chain is UPF0178 protein RD1_0321 (151 aa).

The protein belongs to the UPF0178 family.

This chain is UPF0178 protein RD1_0321, found in Roseobacter denitrificans (strain ATCC 33942 / OCh 114) (Erythrobacter sp. (strain OCh 114)).